A 341-amino-acid chain; its full sequence is Glycerol-3-phosphate dehydrogenase [NAD(P)+] (341 aa).

NADPH contacts are provided by serine 11, tryptophan 12, arginine 33, and lysine 106. Residues lysine 106, glycine 137, and serine 139 each coordinate sn-glycerol 3-phosphate. NADPH is bound at residue alanine 141. Positions 192, 245, 255, 256, and 257 each coordinate sn-glycerol 3-phosphate. Residue lysine 192 is the Proton acceptor of the active site. Arginine 256 lines the NADPH pocket. Positions 280 and 282 each coordinate NADPH.

The protein belongs to the NAD-dependent glycerol-3-phosphate dehydrogenase family.

Its subcellular location is the cytoplasm. It carries out the reaction sn-glycerol 3-phosphate + NAD(+) = dihydroxyacetone phosphate + NADH + H(+). The catalysed reaction is sn-glycerol 3-phosphate + NADP(+) = dihydroxyacetone phosphate + NADPH + H(+). It functions in the pathway membrane lipid metabolism; glycerophospholipid metabolism. In terms of biological role, catalyzes the reduction of the glycolytic intermediate dihydroxyacetone phosphate (DHAP) to sn-glycerol 3-phosphate (G3P), the key precursor for phospholipid synthesis. The protein is Glycerol-3-phosphate dehydrogenase [NAD(P)+] of Bacillus cytotoxicus (strain DSM 22905 / CIP 110041 / 391-98 / NVH 391-98).